The sequence spans 679 residues: DNA-directed RNA polymerase subunit beta' (679 aa).

Residues Cys69, Cys71, Cys84, and Cys87 each contribute to the Zn(2+) site. 3 residues coordinate Mg(2+): Asp486, Asp488, and Asp490.

Belongs to the RNA polymerase beta' chain family. RpoC1 subfamily. In plastids the minimal PEP RNA polymerase catalytic core is composed of four subunits: alpha, beta, beta', and beta''. When a (nuclear-encoded) sigma factor is associated with the core the holoenzyme is formed, which can initiate transcription. Mg(2+) serves as cofactor. Zn(2+) is required as a cofactor.

The protein localises to the plastid. It is found in the chloroplast. The enzyme catalyses RNA(n) + a ribonucleoside 5'-triphosphate = RNA(n+1) + diphosphate. In terms of biological role, DNA-dependent RNA polymerase catalyzes the transcription of DNA into RNA using the four ribonucleoside triphosphates as substrates. The sequence is that of DNA-directed RNA polymerase subunit beta' from Physcomitrium patens (Spreading-leaved earth moss).